The following is a 424-amino-acid chain: Dihydroorotase (424 aa).

Zn(2+) contacts are provided by His-60 and His-62. Substrate contacts are provided by residues 62-64 and Asn-94; that span reads HFR. Asp-151, His-178, and His-231 together coordinate Zn(2+). Asn-277 contributes to the substrate binding site. Asp-304 lines the Zn(2+) pocket. Asp-304 is an active-site residue. His-308 contributes to the substrate binding site.

The protein belongs to the metallo-dependent hydrolases superfamily. DHOase family. Class I DHOase subfamily. The cofactor is Zn(2+).

The catalysed reaction is (S)-dihydroorotate + H2O = N-carbamoyl-L-aspartate + H(+). The protein operates within pyrimidine metabolism; UMP biosynthesis via de novo pathway; (S)-dihydroorotate from bicarbonate: step 3/3. Catalyzes the reversible cyclization of carbamoyl aspartate to dihydroorotate. This chain is Dihydroorotase, found in Clostridium acetobutylicum (strain ATCC 824 / DSM 792 / JCM 1419 / IAM 19013 / LMG 5710 / NBRC 13948 / NRRL B-527 / VKM B-1787 / 2291 / W).